Here is a 214-residue protein sequence, read N- to C-terminus: A-type ATP synthase subunit D (214 aa).

The protein belongs to the V-ATPase D subunit family. In terms of assembly, has multiple subunits with at least A(3), B(3), C, D, E, F, H, I and proteolipid K(x).

It localises to the cell membrane. Component of the A-type ATP synthase that produces ATP from ADP in the presence of a proton gradient across the membrane. The polypeptide is A-type ATP synthase subunit D (Pyrococcus furiosus (strain ATCC 43587 / DSM 3638 / JCM 8422 / Vc1)).